A 170-amino-acid polypeptide reads, in one-letter code: Large ribosomal subunit protein bL17 (170 aa).

Over residues 124–134 the composition is skewed to low complexity; that stretch reads AAEAPKAAKAA. The segment at 124 to 170 is disordered; it reads AAEAPKAAKAAPVKEAKPAAEEAPAKPKRTRKPKADEADAEAAKEEN. Basic and acidic residues-rich tracts occupy residues 135-148 and 156-170; these read PVKE…EAPA and PKAD…KEEN.

Belongs to the bacterial ribosomal protein bL17 family. In terms of assembly, part of the 50S ribosomal subunit. Contacts protein L32.

The protein is Large ribosomal subunit protein bL17 of Desulfovibrio desulfuricans (strain ATCC 27774 / DSM 6949 / MB).